The following is a 182-amino-acid chain: Small ribosomal subunit protein uS5 (182 aa).

Residues F16–V79 enclose the S5 DRBM domain.

It belongs to the universal ribosomal protein uS5 family. Part of the 30S ribosomal subunit. Contacts proteins S4 and S8.

Its function is as follows. With S4 and S12 plays an important role in translational accuracy. Located at the back of the 30S subunit body where it stabilizes the conformation of the head with respect to the body. The polypeptide is Small ribosomal subunit protein uS5 (Bartonella quintana (strain Toulouse) (Rochalimaea quintana)).